A 230-amino-acid polypeptide reads, in one-letter code: Ribosome-recycling factor, mitochondrial (230 aa).

Residues 1–24 (MILTTARLNCRPVTVPRLFNRSFS) constitute a mitochondrion transit peptide.

Belongs to the RRF family.

The protein resides in the mitochondrion. Necessary for protein synthesis in mitochondria. Functions as a ribosome recycling factor in mitochondria. The sequence is that of Ribosome-recycling factor, mitochondrial (RRF1) from Saccharomyces cerevisiae (strain ATCC 204508 / S288c) (Baker's yeast).